Reading from the N-terminus, the 57-residue chain is Ribosome modulation factor (57 aa).

Positions 1 to 28 (MKRQKRDRLERAQSQGYKAGLNGRSHDE) are disordered.

The protein belongs to the ribosome modulation factor family.

The protein localises to the cytoplasm. Its function is as follows. During stationary phase, converts 70S ribosomes to an inactive dimeric form (100S ribosomes). In Vibrio cholerae serotype O1 (strain MJ-1236), this protein is Ribosome modulation factor.